Consider the following 213-residue polypeptide: Redox-sensing transcriptional repressor Rex (213 aa).

The H-T-H motif DNA-binding region spans 16-55 (VYSRFLERMDRNGIVTVSSGEIAEGVGVSSAQVRKDLAYF). An NAD(+)-binding site is contributed by 90–95 (GAGNLG).

The protein belongs to the transcriptional regulatory Rex family. Homodimer.

The protein localises to the cytoplasm. Modulates transcription in response to changes in cellular NADH/NAD(+) redox state. This chain is Redox-sensing transcriptional repressor Rex, found in Pelotomaculum thermopropionicum (strain DSM 13744 / JCM 10971 / SI).